A 140-amino-acid chain; its full sequence is Large ribosomal subunit protein uL13 (140 aa).

It belongs to the universal ribosomal protein uL13 family. As to quaternary structure, part of the 50S ribosomal subunit.

Its function is as follows. This protein is one of the early assembly proteins of the 50S ribosomal subunit, although it is not seen to bind rRNA by itself. It is important during the early stages of 50S assembly. This Sulfurimonas denitrificans (strain ATCC 33889 / DSM 1251) (Thiomicrospira denitrificans (strain ATCC 33889 / DSM 1251)) protein is Large ribosomal subunit protein uL13.